The primary structure comprises 354 residues: UDP-3-O-acylglucosamine N-acyltransferase (354 aa).

The active-site Proton acceptor is His-247.

It belongs to the transferase hexapeptide repeat family. LpxD subfamily. In terms of assembly, homotrimer.

It catalyses the reaction a UDP-3-O-[(3R)-3-hydroxyacyl]-alpha-D-glucosamine + a (3R)-hydroxyacyl-[ACP] = a UDP-2-N,3-O-bis[(3R)-3-hydroxyacyl]-alpha-D-glucosamine + holo-[ACP] + H(+). The protein operates within bacterial outer membrane biogenesis; LPS lipid A biosynthesis. Catalyzes the N-acylation of UDP-3-O-acylglucosamine using 3-hydroxyacyl-ACP as the acyl donor. Is involved in the biosynthesis of lipid A, a phosphorylated glycolipid that anchors the lipopolysaccharide to the outer membrane of the cell. The polypeptide is UDP-3-O-acylglucosamine N-acyltransferase (Chlamydia trachomatis serovar L2b (strain UCH-1/proctitis)).